The following is a 1483-amino-acid chain: Cystic fibrosis transmembrane conductance regulator (1483 aa).

Residues Met1–Phe77 lie on the Cytoplasmic side of the membrane. A helical transmembrane segment spans residues Phe78 to Gln98. One can recognise an ABC transmembrane type-1 1 domain in the interval Phe81 to Leu365. Residues Pro99–Tyr122 lie on the Extracellular side of the membrane. Residues Leu123 to His146 form a helical membrane-spanning segment. Residues His147 to Leu195 lie on the Cytoplasmic side of the membrane. The chain crosses the membrane as a helical span at residues Ala196–Trp216. The Extracellular portion of the chain corresponds to Asp217–Ser222. Residues Ala223–Met243 traverse the membrane as a helical segment. The Cytoplasmic portion of the chain corresponds to Ile244–Lys298. A helical transmembrane segment spans residues Ala299–Ser319. Residues Leu320 to Thr339 are Extracellular-facing. A helical transmembrane segment spans residues Ile340–Val358. Residues Gln359–Asn859 are Cytoplasmic-facing. ATP is bound by residues Trp401, Ser434, Gly458–Thr465, and Gln493. An ABC transporter 1 domain is found at Asn423–Gly646. Cys524 carries S-palmitoyl cysteine lipidation. Residues Ser549 and Ser660 each carry the phosphoserine modification. The tract at residues Ser654 to Glu832 is disordered R region. Residue Ser670 is modified to Phosphoserine; by PKA. The residue at position 686 (Ser686) is a Phosphoserine. Lys688 is covalently cross-linked (Glycyl lysine isopeptide (Lys-Gly) (interchain with G-Cter in ubiquitin)). Ser700 and Ser712 each carry phosphoserine. Thr717 carries the post-translational modification Phosphothreonine. Residues Ser737, Ser768, Ser791, Ser796, and Ser814 each carry the phosphoserine modification. A helical membrane pass occupies residues Leu860 to Val880. Residues Leu860–Ser1156 enclose the ABC transmembrane type-1 2 domain. Residues Val881–Ile919 are Extracellular-facing. Asn887, Asn895, and Asn901 each carry an N-linked (GlcNAc...) asparagine glycan. Residues Tyr920–His940 traverse the membrane as a discontinuously helical segment. Residues Thr941–Thr991 are Cytoplasmic-facing. The helical transmembrane segment at Ile992–Leu1012 threads the bilayer. Over Gln1013–Pro1014 the chain is Extracellular. A helical transmembrane segment spans residues Tyr1015–Leu1035. Topologically, residues His1036–Thr1096 are cytoplasmic. A helical membrane pass occupies residues Leu1097 to Phe1117. Topologically, residues Ile1118–Gly1131 are extracellular. A helical membrane pass occupies residues Ile1132–Ile1152. The Cytoplasmic segment spans residues Glu1153–Leu1483. An ABC transporter 2 domain is found at Met1213–Pro1446. ATP-binding positions include Tyr1222 and Gly1247–Ser1254. Residues Arg1389–Leu1483 form an interaction with GORASP2 region. Cys1398 is lipidated: S-palmitoyl cysteine. The disordered stretch occupies residues Ile1444–Leu1483. Residue Ser1459 is modified to Phosphoserine. A compositionally biased stretch (acidic residues) spans Glu1473–Leu1483. The short motif at Thr1481–Leu1483 is the PDZ-binding element.

This sequence belongs to the ABC transporter superfamily. ABCC family. CFTR transporter (TC 3.A.1.202) subfamily. In terms of assembly, monomer; does not require oligomerization for channel activity. May form oligomers in the membrane. Interacts with SLC26A3, SLC26A6 and NHERF1. Interacts with SHANK2. Interacts with MYO6. Interacts (via C-terminus) with GOPC (via PDZ domain); this promotes CFTR internalization and thereby decreases channel activity. Interacts with SLC4A7 through NHERF1. Found in a complex with MYO5B and RAB11A. Interacts with ANO1. Interacts with SLC26A8. Interacts with AHCYL1; the interaction increases CFTR activity. Interacts with CSE1L. The core-glycosylated form interacts with GORASP2 (via PDZ GRASP-type 1 domain) in respone to ER stress. Interacts with MARCHF2; the interaction leads to CFTR ubiqtuitination and degradation. Interacts with ADGRG2. Post-translationally, N-glycosylated. Phosphorylated; cAMP treatment promotes phosphorylation and activates the channel. Dephosphorylation decreases the ATPase activity (in vitro). Phosphorylation at PKA sites activates the channel. Phosphorylation at PKC sites enhances the response to phosphorylation by PKA. Phosphorylated by AMPK; this inhibits channel activity. In terms of processing, ubiquitinated, leading to its degradation in the lysosome. Deubiquitination by USP10 in early endosomes enhances its endocytic recycling to the cell membrane. Ubiquitinated by RNF185 during ER stress. Ubiquitinated by MARCHF2.

The protein localises to the apical cell membrane. It localises to the early endosome membrane. Its subcellular location is the cell membrane. It is found in the recycling endosome membrane. The protein resides in the endoplasmic reticulum membrane. The protein localises to the nucleus. It catalyses the reaction ATP + H2O + closed Cl(-) channel = ADP + phosphate + open Cl(-) channel.. The enzyme catalyses chloride(in) = chloride(out). The catalysed reaction is hydrogencarbonate(in) = hydrogencarbonate(out). It carries out the reaction ATP + H2O = ADP + phosphate + H(+). Its function is as follows. Epithelial ion channel that plays an important role in the regulation of epithelial ion and water transport and fluid homeostasis. Mediates the transport of chloride ions across the cell membrane. Possesses an intrinsic ATPase activity and utilizes ATP to gate its channel; the passive flow of anions through the channel is gated by cycles of ATP binding and hydrolysis by the ATP-binding domains. The ion channel is also permeable to HCO(3)(-); selectivity depends on the extracellular chloride concentration. Exerts its function also by modulating the activity of other ion channels and transporters. Contributes to the regulation of the pH and the ion content of the epithelial fluid layer. Modulates the activity of the epithelial sodium channel (ENaC) complex, in part by regulating the cell surface expression of the ENaC complex. May regulate bicarbonate secretion and salvage in epithelial cells by regulating the transporter SLC4A7. Can inhibit the chloride channel activity of ANO1. Plays a role in the chloride and bicarbonate homeostasis during sperm epididymal maturation and capacitation. The sequence is that of Cystic fibrosis transmembrane conductance regulator from Canis lupus familiaris (Dog).